Consider the following 190-residue polypeptide: Protein E6C (190 aa).

The segment covering 1–15 (MFGVAKPPPSPIPKP) has biased composition (pro residues). Disordered stretches follow at residues 1 to 110 (MFGV…EGRR) and 160 to 190 (PRTP…PPDD). The segment covering 36-46 (ARQRASTRHRP) has biased composition (basic residues). Composition is skewed to pro residues over residues 162–171 (TPGPVAPIPE) and 181–190 (TRTPPPPPDD).

This is Protein E6C (13) from Equus caballus (Horse).